The following is a 302-amino-acid chain: N-acetylaspartate synthetase (302 aa).

A compositionally biased stretch (pro residues) spans 46 to 60 (PGPAAAPPAPPPAPV). Residues 46 to 72 (PGPAAAPPAPPPAPVAQPHGGAGGAGP) form a disordered region. A helical transmembrane segment spans residues 121–141 (YALLAALCFAVSRSLLLTCLV). The N-acetyltransferase domain maps to 143 to 283 (AALLGLRYYY…VLPGMTLSLA (141 aa)).

The protein belongs to the NAT8 family. As to expression, expressed in brain.

Its subcellular location is the cytoplasm. The protein resides in the microsome membrane. It localises to the mitochondrion membrane. The protein localises to the endoplasmic reticulum membrane. It carries out the reaction L-aspartate + acetyl-CoA = N-acetyl-L-aspartate + CoA + H(+). Aminooxyacetic acid (AOAA) blocks its activity in both cytoplasm and mitochondria. Its function is as follows. Catalyzes the synthesis of N-acetylaspartate acid (NAA) from L-aspartate and acetyl-CoA. Promotes dopamine uptake by regulating TNF-alpha expression. Attenuates methamphetamine-induced inhibition of dopamine uptake. In Homo sapiens (Human), this protein is N-acetylaspartate synthetase.